We begin with the raw amino-acid sequence, 549 residues long: Glucose-6-phosphate isomerase (549 aa).

Residue Glu-355 is the Proton donor of the active site. Residues His-386 and Lys-514 contribute to the active site.

It belongs to the GPI family.

Its subcellular location is the cytoplasm. The enzyme catalyses alpha-D-glucose 6-phosphate = beta-D-fructose 6-phosphate. It participates in carbohydrate biosynthesis; gluconeogenesis. It functions in the pathway carbohydrate degradation; glycolysis; D-glyceraldehyde 3-phosphate and glycerone phosphate from D-glucose: step 2/4. Functionally, catalyzes the reversible isomerization of glucose-6-phosphate to fructose-6-phosphate. This chain is Glucose-6-phosphate isomerase, found in Klebsiella pneumoniae (strain 342).